A 234-amino-acid chain; its full sequence is Small ribosomal subunit protein uS3 (234 aa).

Positions Val-39 to Lys-107 constitute a KH type-2 domain.

The protein belongs to the universal ribosomal protein uS3 family. Part of the 30S ribosomal subunit. Forms a tight complex with proteins S10 and S14.

Functionally, binds the lower part of the 30S subunit head. Binds mRNA in the 70S ribosome, positioning it for translation. This Haemophilus ducreyi (strain 35000HP / ATCC 700724) protein is Small ribosomal subunit protein uS3.